Consider the following 292-residue polypeptide: Early E4 34 kDa protein (292 aa).

Belongs to the adenoviridae E4 30 to 34 kDa protein family. In terms of assembly, interacts with E1B-55k.

Its subcellular location is the host nucleus. The protein resides in the host cytoplasm. Functionally, plays a major role to prevent cellular inhibition of viral genome replication by nuclear bodies. Assembles an SCF-like E3 ubiquitin ligase complex based on the cellular proteins ELOB, ELOC, CUL5 and RBX1, in cooperation with viral E1B-55K. This viral RING-type ligase ubiquitinates cellular substrates prior to proteasomal degradation: p53/TP53, LIG4, MRE11-RAD50-NBS1 (MRN) complex, ITGA3, DAXX and BLM. The chain is Early E4 34 kDa protein from Human adenovirus D serotype 9 (HAdV-9).